The chain runs to 137 residues: uncharacterized protein (137 aa).

Residues 5 to 136 form the HTH marR-type domain; sequence NRHLIHQINQ…FSHLFRMFLQ (132 aa). A DNA-binding region (H-T-H motif) is located at residues 51–74; sequence QKEIWSYLNVEAPTVTRTIKRLEE.

This is an uncharacterized protein from Bacillus subtilis (strain 168).